The primary structure comprises 402 residues: UDP-glucose 6-dehydrogenase (402 aa).

NAD(+) is bound by residues 2–19, valine 11, aspartate 29, lysine 34, threonine 83, threonine 118, and glutamate 145; that span reads KIAV…GVLL. Residues 141–145, lysine 204, asparagine 208, 249–253, and glycine 257 contribute to the substrate site; these read EFLRE and YNNPS. Residue tyrosine 259 coordinates NAD(+). The Nucleophile role is filled by cysteine 260. Residue lysine 263 participates in NAD(+) binding. Lysine 320 is a substrate binding site. Arginine 327 is an NAD(+) binding site.

It belongs to the UDP-glucose/GDP-mannose dehydrogenase family.

It catalyses the reaction UDP-alpha-D-glucose + 2 NAD(+) + H2O = UDP-alpha-D-glucuronate + 2 NADH + 3 H(+). The protein operates within nucleotide-sugar biosynthesis; UDP-alpha-D-glucuronate biosynthesis; UDP-alpha-D-glucuronate from UDP-alpha-D-glucose: step 1/1. Catalyzes the formation of UDP-glucuronic acid which is required for capsular hyaluronic acid synthesis. The protein is UDP-glucose 6-dehydrogenase (hasB) of Streptococcus pyogenes serotype M1.